Consider the following 289-residue polypeptide: Probable endonuclease 4 (289 aa).

Zn(2+) contacts are provided by H75, H115, E153, D187, H190, H224, D237, H239, and E269.

The protein belongs to the AP endonuclease 2 family. Zn(2+) serves as cofactor.

It carries out the reaction Endonucleolytic cleavage to 5'-phosphooligonucleotide end-products.. In terms of biological role, endonuclease IV plays a role in DNA repair. It cleaves phosphodiester bonds at apurinic or apyrimidinic (AP) sites, generating a 3'-hydroxyl group and a 5'-terminal sugar phosphate. This chain is Probable endonuclease 4, found in Chlamydia abortus (strain DSM 27085 / S26/3) (Chlamydophila abortus).